We begin with the raw amino-acid sequence, 165 residues long: Cyclic pyranopterin monophosphate synthase (165 aa).

Substrate-binding positions include 76-78 (LCH) and 114-115 (ME). D129 is an active-site residue.

Belongs to the MoaC family. In terms of assembly, homohexamer; trimer of dimers.

The enzyme catalyses (8S)-3',8-cyclo-7,8-dihydroguanosine 5'-triphosphate = cyclic pyranopterin phosphate + diphosphate. It participates in cofactor biosynthesis; molybdopterin biosynthesis. Its function is as follows. Catalyzes the conversion of (8S)-3',8-cyclo-7,8-dihydroguanosine 5'-triphosphate to cyclic pyranopterin monophosphate (cPMP). The polypeptide is Cyclic pyranopterin monophosphate synthase (Brucella canis (strain ATCC 23365 / NCTC 10854 / RM-666)).